The chain runs to 110 residues: Snake venom vascular endothelial growth factor toxin ICPP (110 aa).

Pyrrolidone carboxylic acid is present on Q1. Intrachain disulfides connect C14–C56, C45–C91, and C49–C93.

In terms of assembly, homodimer; disulfide-linked. Interacts with high affinity with KDR/VEGFR-2, and with a lower affinity with neuropilin-1 (NRP1) and neuropilin-2 (NRP2). In terms of tissue distribution, expressed by the venom gland.

Its subcellular location is the secreted. In terms of biological role, snake venom VEGFs may contribute to venom dispersion and prey subjugation by inducing vascular permeability and hypotension. This protein increases vascular permeability and angiogenesis probably through VEGF receptor (KDR/VEGFR-2) signaling. Induces DNA synthesis in human umbilical vein endothelial cells, and promotes mouse embryonic stem cell proliferation and differentiation. It may also induce a drastic hypotensive effect after intravenous injection. The hypotension is mediated by nitric oxide (NO), which is produced by VEGF-activated endothelium NO synthase. This Macrovipera lebetinus (Levantine viper) protein is Snake venom vascular endothelial growth factor toxin ICPP.